A 198-amino-acid chain; its full sequence is Superoxide dismutase [Fe] (198 aa).

Positions 27, 74, 158, and 162 each coordinate Fe cation.

Belongs to the iron/manganese superoxide dismutase family. As to quaternary structure, homodimer. It depends on Fe cation as a cofactor.

It localises to the cytoplasm. The enzyme catalyses 2 superoxide + 2 H(+) = H2O2 + O2. In terms of biological role, destroys superoxide anion radicals which are normally produced within the cells and which are toxic to biological systems. This Plasmodium falciparum (isolate 3D7) protein is Superoxide dismutase [Fe] (SODB).